Consider the following 1045-residue polypeptide: Desmoglein-1 (1045 aa).

Residues 1–23 form the signal peptide; that stretch reads MNWPFFRTAAVLFIFLVVLEVNS. The propeptide occupies 24–49; sequence EFRIQVRDYNTKNGTIKWHSIRRQKR. N36, N110, and N180 each carry an N-linked (GlcNAc...) asparagine glycan. 4 Cadherin domains span residues 50–158, 159–270, 271–385, and 386–496; these read EWIK…PVFS, MSTF…PYME, LPSN…GSVF, and RPGS…TDGA. Residues 50-546 are Extracellular-facing; the sequence is EWIKFAAACR…HPLDNVHFGP (497 aa). Residues 547–567 form a helical membrane-spanning segment; sequence AGIGLLIMGFLVLGLVPFLLM. Topologically, residues 568–1045 are cytoplasmic; the sequence is YCDCGGAPGG…TKYSTVQYTK (478 aa). 5 Desmoglein repeat repeats span residues 814–840, 841–870, 871–900, 901–928, and 929–957; these read TYPS…TMTE, SYTT…ERVV, GPIS…ERVI, APNS…ERVI, and RPTS…ERVV. The segment at 1019-1045 is disordered; it reads FSNTLGSASPTTTRSRITKYSTVQYTK. The segment covering 1020 to 1045 has biased composition (polar residues); it reads SNTLGSASPTTTRSRITKYSTVQYTK.

As to quaternary structure, binds to JUP/plakoglobin. Interacts with PKP2. Interacts with DSC3; there is evidence to suggest that the interaction promotes cell-cell adhesion of keratinocytes.

The protein localises to the cell membrane. The protein resides in the cell junction. It localises to the desmosome. It is found in the cytoplasm. Its subcellular location is the nucleus. Functionally, component of intercellular desmosome junctions. Involved in the interaction of plaque proteins and intermediate filaments mediating cell-cell adhesion. The protein is Desmoglein-1 (DSG1) of Sus scrofa (Pig).